The primary structure comprises 415 residues: Fructose-1,6-bisphosphatase, chloroplastic (415 aa).

The transit peptide at 1-57 directs the protein to the chloroplast; sequence MASIGPATTTAVKLRSSIFNPQSSTLSPSQQCITFTKSLHSFPTATRHNVASGVRCM. Residues Glu135, Glu164, Asp185, Leu187, and Asp188 each coordinate Mg(2+). 188-191 contributes to the substrate binding site; it reads DGSS. Residues 207–232 form an involved in light regulation region; sequence SPNDECIVDSDHDDESQLSAEEQRCV. Cys231 and Cys236 are joined by a disulfide. Positions 295, 327, 345, 347, and 357 each coordinate substrate. Glu363 serves as a coordination point for Mg(2+).

Belongs to the FBPase class 1 family. In terms of assembly, homotetramer. Requires Mg(2+) as cofactor.

The protein resides in the plastid. Its subcellular location is the chloroplast. It catalyses the reaction beta-D-fructose 1,6-bisphosphate + H2O = beta-D-fructose 6-phosphate + phosphate. The protein operates within carbohydrate biosynthesis; Calvin cycle. In Spinacia oleracea (Spinach), this protein is Fructose-1,6-bisphosphatase, chloroplastic.